Reading from the N-terminus, the 190-residue chain is Peptidyl-prolyl cis-trans isomerase A (190 aa).

A signal peptide spans 1 to 23 (MSKRILAAVVTVLSLTAFSPAFA). The PPIase cyclophilin-type domain maps to 26-187 (TSTHVLLTTS…KPIVIQSAKI (162 aa)).

It belongs to the cyclophilin-type PPIase family.

Its subcellular location is the periplasm. It catalyses the reaction [protein]-peptidylproline (omega=180) = [protein]-peptidylproline (omega=0). In terms of biological role, PPIases accelerate the folding of proteins. It catalyzes the cis-trans isomerization of proline imidic peptide bonds in oligopeptides. This is Peptidyl-prolyl cis-trans isomerase A (rotA) from Dickeya dadantii (strain 3937) (Erwinia chrysanthemi (strain 3937)).